Consider the following 240-residue polypeptide: Venom hemolysin-like protein 1 (240 aa).

The N-terminal stretch at 1-18 (MQYKLILLVVGLFQASLA) is a signal peptide. The disordered stretch occupies residues 25 to 50 (ESVPHPSKDVAPPDTQDSSTQTEVTT). Positions 39–50 (TQDSSTQTEVTT) are enriched in polar residues.

As to expression, expressed by the venom gland (anterior main gland) (at protein level).

The protein resides in the secreted. The polypeptide is Venom hemolysin-like protein 1 (Platymeris rhadamanthus (Red spot assassin bug)).